The sequence spans 73 residues: Eukaryotic translation initiation factor 4 gamma 2 (73 aa).

In terms of domain architecture, W2 spans 1 to 70 (QVHCYNSNFP…ETAEEEESEE (70 aa)).

The protein belongs to the eukaryotic initiation factor 4G family. In terms of assembly, interacts with the serine/threonine protein kinases MKNK1 and MKNK2. Binds EIF4A and EIF3. In terms of processing, phosphorylation; hyperphosphorylated during mitosis.

Appears to play a role in the switch from cap-dependent to IRES-mediated translation during mitosis, apoptosis and viral infection. Cleaved by some caspases and viral proteases. The polypeptide is Eukaryotic translation initiation factor 4 gamma 2 (EIF4G2) (Gallus gallus (Chicken)).